An 86-amino-acid chain; its full sequence is Small ribosomal subunit protein uS15c (86 aa).

The protein belongs to the universal ribosomal protein uS15 family. In terms of assembly, part of the 30S ribosomal subunit.

Its subcellular location is the plastid. The protein is Small ribosomal subunit protein uS15c (rps15) of Cuscuta obtusiflora (Peruvian dodder).